We begin with the raw amino-acid sequence, 403 residues long: Nuclear receptor subfamily 2 group F member 5 (403 aa).

The segment at 16-44 (PGSQLQMCSQEPGGTPGTPSGSTPGNDAL) is disordered. A DNA-binding region (nuclear receptor) is located at residues 51 to 126 (NVDCMVCGDK…VGMRREAVQR (76 aa)). NR C4-type zinc fingers lie at residues 54 to 74 (CMVC…CEGC) and 90 to 114 (CRGN…LKKC). Residues 152-378 (YLSGFISLLL…TLLRDMLLSG (227 aa)) form the NR LBD domain.

It belongs to the nuclear hormone receptor family. NR2 subfamily.

It is found in the nucleus. Putative receptor that is required in photoreceptor cells precursors during eye development. This chain is Nuclear receptor subfamily 2 group F member 5 (nr2f5), found in Danio rerio (Zebrafish).